The sequence spans 1571 residues: Disco-interacting protein 2 homolog A (1571 aa).

In terms of domain architecture, DMAP1-binding spans 9 to 127; the sequence is EAAPLPAEVR…KRRSVLVHSS (119 aa). Residues 60 to 203 form a disordered region; it reads LQAENRIPGP…APSAAATPGA (144 aa). Basic and acidic residues predominate over residues 86–98; that stretch reads ASRDERFRSDVHT. Residue serine 94 is modified to Phosphoserine. Polar residues-rich tracts occupy residues 127 to 139 and 152 to 162; these read SVETYTPPDTSSA and LTSTPLQSHSS. A phosphothreonine mark is found at threonine 132 and threonine 155. Residues 174–203 show a composition bias toward low complexity; sequence SSTSSSASSTSSHPGGRPTTAPSAAATPGA. 2 short sequence motifs (PXXP motif; required for interaction with CTTN) span residues 283-286 and 307-310; these read PKRP and PNQP. Residues 302–327 form a disordered region; that stretch reads VQQPDPNQPKPEGSETSVLRGEPLTA.

Belongs to the DIP2 family. In terms of assembly, interacts with FSTL1; DIP2A may act as a cell surface receptor for FSTL1. Interacts (via N-terminus) with CTTN (via SH3 domain); the interaction promotes acetylation of CTTN and is required for proper synaptic transmission. Interacts with SHANK3. As to expression, low expression in all tissues tested.

Its subcellular location is the cell membrane. The protein resides in the mitochondrion. The protein localises to the cell projection. It localises to the dendritic spine. It carries out the reaction acetate + ATP + CoA = acetyl-CoA + AMP + diphosphate. Functionally, catalyzes the de novo synthesis of acetyl-CoA in vitro. Promotes acetylation of CTTN, possibly by providing the acetyl donor, ensuring correct dendritic spine morphology and synaptic transmission. Binds to follistatin-related protein FSTL1 and may act as a cell surface receptor for FSTL1, contributing to AKT activation and subsequent FSTL1-induced survival and function of endothelial cells and cardiac myocytes. The chain is Disco-interacting protein 2 homolog A (DIP2A) from Homo sapiens (Human).